Here is a 231-residue protein sequence, read N- to C-terminus: U1 small nuclear ribonucleoprotein C (231 aa).

The Matrin-type zinc finger occupies 4–36; that stretch reads YYCEYCHSYLTHDTLSVRKSHLVGKNHLRITAD. The span at 49 to 61 shows a compositional bias: basic residues; sequence HNHKRRHIGKRGR. Disordered stretches follow at residues 49–71, 137–177, and 205–231; these read HNHKRRHIGKRGRKERENSSQNE, PQRA…LEPP, and ESKKRMHSDGIRKPSSANGYKRRRYGN.

The protein belongs to the U1 small nuclear ribonucleoprotein C family. In terms of assembly, U1 snRNP is composed of the 7 core Sm proteins SMB1, SMD1, SMD2, SMD3, SME1, SMX3 and SMX2 (Sm proteins B, D1, D2, D3, E, F and G, respectively) that assemble in a heptameric protein ring on the Sm site of the small nuclear RNA to form the core snRNP, and at least 10 U1 snRNP-specific proteins SNP1/U1-70K, MUD1/U1-A, YHC1/U1-C, LUC7, NAM8, PRP39, PRP40, PRP42, SNU56 and SNU71. YHC1/U1-C interacts with U1 snRNA and the 5' splice-site region of the pre-mRNA.

The protein resides in the nucleus. Component of the spliceosomal U1 snRNP, which is essential for recognition of the pre-mRNA 5' splice-site and the subsequent assembly of the spliceosome. YHC1/U1-C is directly involved in initial 5' splice-site recognition for both constitutive and regulated alternative splicing. The interaction with the 5' splice-site seems to precede base-pairing between the pre-mRNA and the U1 snRNA. Stimulates commitment or early (E) complex formation by stabilizing the base pairing of the 5' end of the U1 snRNA and the 5' splice-site region. The chain is U1 small nuclear ribonucleoprotein C from Saccharomyces cerevisiae (strain ATCC 204508 / S288c) (Baker's yeast).